Here is a 3063-residue protein sequence, read N- to C-terminus: Genome polyprotein (3063 aa).

The Peptidase S30 domain maps to 141–284 (KLTEGQMNHL…QSILNSMIQF (144 aa)). Residues H192, D201, and S235 each act as for P1 proteinase activity in the active site. The short motif at 334 to 337 (KITC) is the Involved in interaction with stylet and aphid transmission element. Residues 592 to 594 (PTK) carry the Involved in virions binding and aphid transmission motif. The Peptidase C6 domain maps to 618 to 740 (LYIAKQGYCY…ESDIKHYRVG (123 aa)). Residues C626 and H699 each act as for helper component proteinase activity in the active site. One can recognise a Helicase ATP-binding domain in the interval 1229–1381 (DIAHSEHLDF…TQQPVKLIVE (153 aa)). 1242 to 1249 (GAVGSGKS) is an ATP binding site. Residues 1331 to 1334 (DECH) carry the DECH box motif. Residues 1400-1559 (DVVQFGSNVL…NLPVMTGGVS (160 aa)) form the Helicase C-terminal domain. The short motif at 1884–1892 (RKKGKGKGT) is the Nuclear localization signal element. Y1907 is modified (O-(5'-phospho-RNA)-tyrosine). The segment at 1949 to 1964 (KMVENDDIEMQALGSN) is interaction with host EIF4E. The 219-residue stretch at 2032–2250 (AKSLMRGLRD…VLWGPLKLKD (219 aa)) folds into the Peptidase C4 domain. Catalysis depends on for nuclear inclusion protein A activity residues H2077, D2112, and C2182. The RdRp catalytic domain maps to 2519–2643 (WVYCDADGSQ…AVNPEKESIL (125 aa)). A disordered region spans residues 2798 to 2841 (NDTIDAGGSNKKDAKPEQGSIQPNPNKGKDKDVNAGTSGTHTVP). T3046 bears the Phosphothreonine mark.

Belongs to the potyviridae genome polyprotein family. In terms of assembly, interacts with host eIF4E protein (via cap-binding region); this interaction mediates the translation of the VPg-viral RNA conjugates. Part of a complex that comprises VPg, RNA, host EIF4E and EIF4G; this interaction mediates the translation of the VPg-viral RNA conjugates. Interaction is possible in susceptible hosts but impaired in resistant plants: the VPg of strain LYE84 interacts with tomato eIF4E1 and eIF4E2 as well as with the Capsicum annuum eIF4E1 susceptible allele pvr2(+) but not with resistant alleles pvr2(1), pvr2(2), pvr2(3), pvr2(4), pvr2(5), pvr2(6), pvr2(7), pvr2(8) and pvr2(9), the VPg of strain SON41 interacts with C.annuum eIF4E1 susceptible alleles pvr2(+), pvr2(1), pvr2(2), pvr2(3) and pvr2(4) but not with resistant alleles pvr2(5), pvr2(6), pvr2(7), pvr2(8) and pvr2(9), the VPg of strain LYE90 interacts only with tomato eIF4E1. Post-translationally, VPg is uridylylated by the polymerase and is covalently attached to the 5'-end of the genomic RNA. This uridylylated form acts as a nucleotide-peptide primer for the polymerase. In terms of processing, potyviral RNA is expressed as two polyproteins which undergo post-translational proteolytic processing. Genome polyprotein is processed by NIa-pro, P1 and HC-pro proteinases resulting in the production of at least ten individual proteins. P3N-PIPO polyprotein is cleaved by P1 and HC-pro proteinases resulting in the production of three individual proteins. The P1 proteinase and the HC-pro cleave only their respective C-termini autocatalytically. 6K1 is essential for proper proteolytic separation of P3 from CI.

It is found in the host cytoplasmic vesicle. Its subcellular location is the host nucleus. It localises to the virion. It carries out the reaction RNA(n) + a ribonucleoside 5'-triphosphate = RNA(n+1) + diphosphate. It catalyses the reaction Hydrolyzes glutaminyl bonds, and activity is further restricted by preferences for the amino acids in P6 - P1' that vary with the species of potyvirus, e.g. Glu-Xaa-Xaa-Tyr-Xaa-Gln-|-(Ser or Gly) for the enzyme from tobacco etch virus. The natural substrate is the viral polyprotein, but other proteins and oligopeptides containing the appropriate consensus sequence are also cleaved.. The catalysed reaction is Hydrolyzes a Gly-|-Gly bond at its own C-terminus, commonly in the sequence -Tyr-Xaa-Val-Gly-|-Gly, in the processing of the potyviral polyprotein.. Its function is as follows. Required for aphid transmission and also has proteolytic activity. Only cleaves a Gly-Gly dipeptide at its own C-terminus. Interacts with virions and aphid stylets. Acts as a suppressor of RNA-mediated gene silencing, also known as post-transcriptional gene silencing (PTGS), a mechanism of plant viral defense that limits the accumulation of viral RNAs. May have RNA-binding activity. In terms of biological role, has helicase activity. It may be involved in replication. Functionally, indispensable for virus replication. Reduces the abundance of host transcripts related to jasmonic acid biosynthesis therefore altering the host defenses. In order to increase its own stability, decreases host protein degradation pathways. Indispensable for virus replication. Its function is as follows. Mediates the cap-independent, EIF4E-dependent translation of viral genomic RNAs. Binds to the cap-binding site of host EIF4E and thus interferes with the host EIF4E-dependent mRNA export and translation. VPg-RNA directly binds EIF4E and is a template for transcription. Also forms trimeric complexes with EIF4E-EIF4G, which are templates for translation. In terms of biological role, has RNA-binding and proteolytic activities. Functionally, an RNA-dependent RNA polymerase that plays an essential role in the virus replication. Involved in aphid transmission, cell-to-cell and systemis movement, encapsidation of the viral RNA and in the regulation of viral RNA amplification. The polypeptide is Genome polyprotein (Potato virus Y (strain N) (PVY)).